A 173-amino-acid polypeptide reads, in one-letter code: Bifunctional protein PyrR (173 aa).

Positions 93 to 105 (IILVDDVLYTGRT) match the PRPP-binding motif.

This sequence belongs to the purine/pyrimidine phosphoribosyltransferase family. PyrR subfamily. As to quaternary structure, homodimer and homohexamer; in equilibrium.

The enzyme catalyses UMP + diphosphate = 5-phospho-alpha-D-ribose 1-diphosphate + uracil. In terms of biological role, regulates transcriptional attenuation of the pyrimidine nucleotide (pyr) operon by binding in a uridine-dependent manner to specific sites on pyr mRNA. This disrupts an antiterminator hairpin in the RNA and favors formation of a downstream transcription terminator, leading to a reduced expression of downstream genes. Also displays a weak uracil phosphoribosyltransferase activity which is not physiologically significant. In Streptococcus equi subsp. zooepidemicus (strain MGCS10565), this protein is Bifunctional protein PyrR.